Consider the following 64-residue polypeptide: uncharacterized protein (64 aa).

This is an uncharacterized protein from Archaeoglobus fulgidus (strain ATCC 49558 / DSM 4304 / JCM 9628 / NBRC 100126 / VC-16).